We begin with the raw amino-acid sequence, 127 residues long: Glycine cleavage system H protein (127 aa).

A Lipoyl-binding domain is found at 22 to 104 (QVVIGITHFA…YEGAWMVKVE (83 aa)). At Lys63 the chain carries N6-lipoyllysine.

The protein belongs to the GcvH family. The glycine cleavage system is composed of four proteins: P, T, L and H. The cofactor is (R)-lipoate.

Functionally, the glycine cleavage system catalyzes the degradation of glycine. The H protein shuttles the methylamine group of glycine from the P protein to the T protein. In terms of biological role, is also involved in protein lipoylation via its role as an octanoyl/lipoyl carrier protein intermediate. The protein is Glycine cleavage system H protein of Bacillus cytotoxicus (strain DSM 22905 / CIP 110041 / 391-98 / NVH 391-98).